We begin with the raw amino-acid sequence, 575 residues long: Alpha-(1,6)-fucosyltransferase (575 aa).

The Cytoplasmic portion of the chain corresponds to 1 to 9 (MRPWTGSWR). Residues 10-30 (WIMLILFAWGTLLFYIGGHLV) traverse the membrane as a helical; Signal-anchor for type II membrane protein segment. The Lumenal segment spans residues 31–575 (RDNDHSDHSS…KYPTYPEADK (545 aa)). Intrachain disulfides connect cysteine 204-cysteine 266, cysteine 212-cysteine 230, and cysteine 218-cysteine 222. Positions 206–493 (KAKKLVCNIN…PDASANFRSL (288 aa)) constitute a GT23 domain. Phosphoserine is present on serine 278. An SH3-binding motif is present at residues 299 to 305 (PRPPYLP). The interval 365 to 366 (RR) is important for donor substrate binding. Cysteines 465 and 472 form a disulfide. One can recognise an SH3 domain in the interval 502–563 (PNAHNQIAIY…PSYKVREKIE (62 aa)).

The protein belongs to the glycosyltransferase 23 family. Tyrosine phosphorylated by PKDCC/VLK. In terms of tissue distribution, highest expression in brain.

Its subcellular location is the golgi apparatus. It localises to the golgi stack membrane. The enzyme catalyses N(4)-{beta-D-GlcNAc-(1-&gt;2)-alpha-D-Man-(1-&gt;3)-[beta-D-GlcNAc-(1-&gt;2)-alpha-D-Man-(1-&gt;6)]-beta-D-Man-(1-&gt;4)-beta-D-GlcNAc-(1-&gt;4)-beta-D-GlcNAc}-L-asparaginyl-[protein] + GDP-beta-L-fucose = an N(4)-{beta-D-GlcNAc-(1-&gt;2)-alpha-D-Man-(1-&gt;3)-[beta-D-GlcNAc-(1-&gt;2)-alpha-D-Man-(1-&gt;6)]-beta-D-Man-(1-&gt;4)-beta-D-GlcNAc-(1-&gt;4)-[alpha-L-Fuc-(1-&gt;6)]-beta-D-GlcNAc}-L-asparaginyl-[protein] + GDP + H(+). It functions in the pathway protein modification; protein glycosylation. Its function is as follows. Catalyzes the addition of fucose in alpha 1-6 linkage to the first GlcNAc residue, next to the peptide chains in N-glycans. The protein is Alpha-(1,6)-fucosyltransferase (FUT8) of Sus scrofa (Pig).